The following is a 131-amino-acid chain: Profilin-2 (131 aa).

Cysteine 13 and cysteine 115 are oxidised to a cystine. Residues 81-97 (AVIRGKKGPGGVTVKKT) carry the Involved in PIP2 interaction motif. Position 111 is a phosphothreonine (threonine 111).

This sequence belongs to the profilin family. As to quaternary structure, multimer. Occurs in many kinds of cells as a complex with monomeric actin in a 1:1 ratio. Phosphorylated by MAP kinases.

The protein resides in the cytoplasm. Its subcellular location is the cytoskeleton. Functionally, binds to actin and affects the structure of the cytoskeleton. At high concentrations, profilin prevents the polymerization of actin, whereas it enhances it at low concentrations. By binding to PIP2, it inhibits the formation of IP3 and DG. The sequence is that of Profilin-2 from Hevea brasiliensis (Para rubber tree).